A 146-amino-acid chain; its full sequence is Snaclec anticoagulant protein subunit B (146 aa).

Positions 1 to 23 are cleaved as a signal peptide; that stretch reads MGRFIFVSFGLLVLFLSLSGTAA. Residues 24-146 form the C-type lectin domain; the sequence is DCPSDWSSYE…IANFVCEFQA (123 aa). 3 cysteine pairs are disulfide-bonded: Cys-25-Cys-36, Cys-53-Cys-142, and Cys-119-Cys-134. 3 residues coordinate Ca(2+): Ser-64, Gln-66, and Glu-70. Glu-143 is a binding site for Ca(2+).

Belongs to the snaclec family. In terms of assembly, heterodimer with subunit A of agkisacutacin or AaACP; disulfide-linked. As to expression, expressed by the venom gland.

Its subcellular location is the secreted. Anticoagulant protein which binds to the gamma-carboxyglutamic acid-domain regions of factors IX and factor X in the presence of calcium with a 1 to 1 stoichiometry. Also inhibits platelet aggregation by binding to platelet glycoprotein Ibalpha (GP1BA) and functioning as a blocker of vWF. Is devoid of hemorrhagic and lethal activities. Possesses antithrombotic and thrombolytic activities. Also hydrolyzes the Aalpha-chain of fibrinogen. Does not affect the Bbeta-chain and the gamma chain. This is Snaclec anticoagulant protein subunit B from Deinagkistrodon acutus (Hundred-pace snake).